The primary structure comprises 499 residues: Na(+)/H(+) antiporter NhaB (499 aa).

11 helical membrane-spanning segments follow: residues 33 to 53 (PVIFLISPYIAGWVLILEFIF), 66 to 86 (PGGLLAIEAVLIGMVSPHTVY), 89 to 109 (VSGNLEVILLLVFMVAGIYFM), 128 to 148 (AILSLLFSLVAAVLSAFLDAL), 237 to 257 (FIEFFVRMAPISIPVLIAGLI), 305 to 325 (AIVALILVVALALHLAEVGLI), 326 to 346 (GLTVIILATAFCGVIEEHQIG), 349 to 369 (FEEALPFTSLLVVFFAVVGVI), 393 to 413 (MFFIANGVLSMISDNVFVATV), 449 to 469 (ATPNGQAAFLFLLTSAIAPLI), and 477 to 497 (VWMALPYTLVMGGLGYVMIVI).

The protein belongs to the NhaB Na(+)/H(+) (TC 2.A.34) antiporter family.

Its subcellular location is the cell inner membrane. It carries out the reaction 2 Na(+)(in) + 3 H(+)(out) = 2 Na(+)(out) + 3 H(+)(in). In terms of biological role, na(+)/H(+) antiporter that extrudes sodium in exchange for external protons. This chain is Na(+)/H(+) antiporter NhaB, found in Hahella chejuensis (strain KCTC 2396).